The following is a 181-amino-acid chain: Cytochrome P450 monooxygenase dtpC (181 aa).

Cys125 serves as a coordination point for heme.

It belongs to the cytochrome P450 family. Heme is required as a cofactor.

It participates in alkaloid biosynthesis. It functions in the pathway secondary metabolite biosynthesis. Its function is as follows. Cytochrome P450 monooxygenase; part of the gene cluster that mediates the biosynthesis of the dimeric diketopiperazine alkaloid ditryptophenaline. The nonribosomal peptide synthase dtpA accepts L-tryptophan and L-phenylalanine as its substrates and forms the phenylalanyl-tryptophanyl cyclic dipeptide product cyclophenylalanyltryptophenyl. The N-methyltransferase dtpB is responsible for the N-methylation of cyclophenylalanyltryptophenyl to yield cyclo-N-methylphenylalanyltryptophenyl. The cytochrome P450 monooxygenase is responsible not only for pyrroloindole ring formation but also for concurrent dimerization of N-methylphenylalanyltryptophanyl diketopiperazine monomers into a homodimeric product. This chain is Cytochrome P450 monooxygenase dtpC, found in Aspergillus flavus (strain ATCC 200026 / FGSC A1120 / IAM 13836 / NRRL 3357 / JCM 12722 / SRRC 167).